The primary structure comprises 528 residues: Nucleobase-ascorbate transporter 5 (528 aa).

The interval 1-20 is disordered; sequence MSAPKSGGDPLPHPPKEQLP. 12 consecutive transmembrane segments (helical) span residues 35 to 55, 71 to 91, 93 to 113, 133 to 153, 159 to 179, 181 to 201, 219 to 239, 285 to 305, 367 to 387, 390 to 410, 418 to 438, and 460 to 479; these read AVLLGFQHYLVMLGTTVLIPS, LIQTILFVAGLNTLLQTVFGT, LPAVIGASYTFVPVTISIMLS, TQGALIVASTLQIILGFSGLW, FLSPLSAAPLVGLVGYGLYEL, FPGVAKCIEIGLPGLIILILI, FAVIFSVAIVWLYAFFLTLGG, FAMMMASFVALVESTGAFIAV, AGFMIFFSILGKFGAVFASIP, IIAALYCLFFAYVGAGGLSLL, FRTLFILGFSIFLGLSIPQYF, and MVNVPFSSKAFVGGCVAYLL.

Belongs to the nucleobase:cation symporter-2 (NCS2) (TC 2.A.40) family. In terms of tissue distribution, weakly expressed in the vasculature of developing leaves.

It localises to the membrane. The protein is Nucleobase-ascorbate transporter 5 (NAT5) of Arabidopsis thaliana (Mouse-ear cress).